The following is a 311-amino-acid chain: MAGLSIIFMGTPDFACPTLTRLIERGEDVIAVVTQPDRPKGRGQKLVPPPVKVIAEEHGIPVLQPQKVRAPEVVAQIRELNPDLIVVVAFGQILPQSLLEIPRHGCINIHASLLPRYRGAAPINWCLINGETETGITTMQMDAGLDTGDMLVKRSISIGPDEDAQSLHDRLSLLGAETIDETLDRLQVGTLTREKQDDALTCYAPMLKKEDGLIDWKQEPQQIKNLVRGFTPWPGAYTTLDGKTLKLYKVSVATECGKPGDIMAVGKDGIIVGCGSGSLRIEELQLEGRKRLSAQDFLAGCRLEPGIRLGH.

Position 112–115 (S112–P115) interacts with (6S)-5,6,7,8-tetrahydrofolate.

It belongs to the Fmt family.

The enzyme catalyses L-methionyl-tRNA(fMet) + (6R)-10-formyltetrahydrofolate = N-formyl-L-methionyl-tRNA(fMet) + (6S)-5,6,7,8-tetrahydrofolate + H(+). Functionally, attaches a formyl group to the free amino group of methionyl-tRNA(fMet). The formyl group appears to play a dual role in the initiator identity of N-formylmethionyl-tRNA by promoting its recognition by IF2 and preventing the misappropriation of this tRNA by the elongation apparatus. The protein is Methionyl-tRNA formyltransferase of Geobacter metallireducens (strain ATCC 53774 / DSM 7210 / GS-15).